The sequence spans 341 residues: HTH-type transcriptional repressor CytR (341 aa).

The HTH lacI-type domain maps to 10–64; that stretch reads ATMKDVALKAKVSTATVSRALMNPDKVSQATRNRVEKAAREVGYLPQPMGRNVKR. Residues 12-31 constitute a DNA-binding region (H-T-H motif); it reads MKDVALKAKVSTATVSRALM.

Functionally, this protein negatively controls the transcription initiation of genes such as deoCABD, udp, and cdd encoding catabolizing enzymes and nupC, nupG, and tsx encoding transporting and pore-forming proteins. Binds cytidine and adenosine as effectors. The sequence is that of HTH-type transcriptional repressor CytR (cytR) from Escherichia coli (strain K12).